Consider the following 395-residue polypeptide: 1-deoxy-D-xylulose 5-phosphate reductoisomerase (395 aa).

NADPH is bound by residues Thr-15, Gly-16, Ser-17, Ile-18, Gly-41, Asn-43, and Asn-126. Lys-127 serves as a coordination point for 1-deoxy-D-xylulose 5-phosphate. Glu-128 is an NADPH binding site. Asp-152 contacts Mn(2+). 4 residues coordinate 1-deoxy-D-xylulose 5-phosphate: Ser-153, Glu-154, Ser-178, and His-201. Glu-154 serves as a coordination point for Mn(2+). Gly-207 lines the NADPH pocket. 1-deoxy-D-xylulose 5-phosphate is bound by residues Ser-214, Asn-219, Lys-220, and Glu-223. Glu-223 serves as a coordination point for Mn(2+).

The protein belongs to the DXR family. Requires Mg(2+) as cofactor. It depends on Mn(2+) as a cofactor.

It catalyses the reaction 2-C-methyl-D-erythritol 4-phosphate + NADP(+) = 1-deoxy-D-xylulose 5-phosphate + NADPH + H(+). Its pathway is isoprenoid biosynthesis; isopentenyl diphosphate biosynthesis via DXP pathway; isopentenyl diphosphate from 1-deoxy-D-xylulose 5-phosphate: step 1/6. Its function is as follows. Catalyzes the NADPH-dependent rearrangement and reduction of 1-deoxy-D-xylulose-5-phosphate (DXP) to 2-C-methyl-D-erythritol 4-phosphate (MEP). In Ruegeria pomeroyi (strain ATCC 700808 / DSM 15171 / DSS-3) (Silicibacter pomeroyi), this protein is 1-deoxy-D-xylulose 5-phosphate reductoisomerase.